The sequence spans 156 residues: Cell division protein SepF (156 aa).

The protein belongs to the SepF family. Homodimer. Interacts with FtsZ.

It localises to the cytoplasm. Functionally, cell division protein that is part of the divisome complex and is recruited early to the Z-ring. Probably stimulates Z-ring formation, perhaps through the cross-linking of FtsZ protofilaments. Its function overlaps with FtsA. The sequence is that of Cell division protein SepF from Ruminiclostridium cellulolyticum (strain ATCC 35319 / DSM 5812 / JCM 6584 / H10) (Clostridium cellulolyticum).